Consider the following 185-residue polypeptide: Ribosome-recycling factor (185 aa).

Belongs to the RRF family.

Its subcellular location is the cytoplasm. Responsible for the release of ribosomes from messenger RNA at the termination of protein biosynthesis. May increase the efficiency of translation by recycling ribosomes from one round of translation to another. The sequence is that of Ribosome-recycling factor from Methylobacillus flagellatus (strain ATCC 51484 / DSM 6875 / VKM B-1610 / KT).